Consider the following 589-residue polypeptide: UvrABC system protein C (589 aa).

The region spanning 14–91 (HKPGCYLWKD…IAKYKPKYNM (78 aa)) is the GIY-YIG domain.

The protein belongs to the UvrC family. Interacts with UvrB in an incision complex.

The protein localises to the cytoplasm. Functionally, the UvrABC repair system catalyzes the recognition and processing of DNA lesions. UvrC both incises the 5' and 3' sides of the lesion. The N-terminal half is responsible for the 3' incision and the C-terminal half is responsible for the 5' incision. In Malacoplasma penetrans (strain HF-2) (Mycoplasma penetrans), this protein is UvrABC system protein C.